The following is a 49-amino-acid chain: Small ribosomal subunit protein uS19c (49 aa).

It belongs to the universal ribosomal protein uS19 family.

The protein localises to the plastid. It is found in the chloroplast. Functionally, protein S19 forms a complex with S13 that binds strongly to the 16S ribosomal RNA. The polypeptide is Small ribosomal subunit protein uS19c (rps19) (Sinapis alba (White mustard)).